An 800-amino-acid polypeptide reads, in one-letter code: Phenylalanine--tRNA ligase beta subunit (800 aa).

The region spanning 39-154 (TKDIKNLVVG…EAQVPGTDAL (116 aa)) is the tRNA-binding domain. A B5 domain is found at 408 to 483 (AFITPIDITA…RIYGYDDIPS (76 aa)). Mg(2+) is bound by residues D461, D467, E470, and E471. One can recognise an FDX-ACB domain in the interval 708 to 800 (PRFPGMSRDI…ALIEQGAVIR (93 aa)).

The protein belongs to the phenylalanyl-tRNA synthetase beta subunit family. Type 1 subfamily. Tetramer of two alpha and two beta subunits. Requires Mg(2+) as cofactor.

Its subcellular location is the cytoplasm. The catalysed reaction is tRNA(Phe) + L-phenylalanine + ATP = L-phenylalanyl-tRNA(Phe) + AMP + diphosphate + H(+). In Staphylococcus aureus (strain USA300), this protein is Phenylalanine--tRNA ligase beta subunit.